A 242-amino-acid polypeptide reads, in one-letter code: Biosynthetic peptidoglycan transglycosylase (242 aa).

The helical transmembrane segment at 19–39 (LMVVLAVFWGGGIALFSVAPV) threads the bilayer.

This sequence belongs to the glycosyltransferase 51 family.

It localises to the cell inner membrane. It carries out the reaction [GlcNAc-(1-&gt;4)-Mur2Ac(oyl-L-Ala-gamma-D-Glu-L-Lys-D-Ala-D-Ala)](n)-di-trans,octa-cis-undecaprenyl diphosphate + beta-D-GlcNAc-(1-&gt;4)-Mur2Ac(oyl-L-Ala-gamma-D-Glu-L-Lys-D-Ala-D-Ala)-di-trans,octa-cis-undecaprenyl diphosphate = [GlcNAc-(1-&gt;4)-Mur2Ac(oyl-L-Ala-gamma-D-Glu-L-Lys-D-Ala-D-Ala)](n+1)-di-trans,octa-cis-undecaprenyl diphosphate + di-trans,octa-cis-undecaprenyl diphosphate + H(+). It functions in the pathway cell wall biogenesis; peptidoglycan biosynthesis. Peptidoglycan polymerase that catalyzes glycan chain elongation from lipid-linked precursors. This Shigella dysenteriae serotype 1 (strain Sd197) protein is Biosynthetic peptidoglycan transglycosylase.